We begin with the raw amino-acid sequence, 264 residues long: MDREPLSSGRLHCSARYKHKRSASSSSAGTTSSGHKDRRSDYDYCGSRRHQRSSSRRRSRSRSSSESPPPEPRHRSGRSSRDRERMHKSREHPQASRCIGVFGLNTNTSQHKVRELFNKYGPIERIQMVIDAQTQRSRGFCFIYFEKLSDARAAKDSCSGIEVDGRRIRVDFSITQRAHTPTPGVYLGRQPRGKAPRSFSPRRGRRVYHDRSASPYDNYRDRYDYRNDRYDRNLRRSPSRNRYTRNRSYSRSRSPQLRRTSSRY.

The tract at residues 1–96 (MDREPLSSGR…HKSREHPQAS (96 aa)) is disordered. Residues 13 to 22 (CSARYKHKRS) are compositionally biased toward basic residues. Residues 23–33 (ASSSSAGTTSS) show a composition bias toward low complexity. Ser-40 carries the phosphoserine modification. The span at 47–61 (SRRHQRSSSRRRSRS) shows a compositional bias: basic residues. Positions 71–85 (EPRHRSGRSSRDRER) are enriched in basic and acidic residues. The RRM domain maps to 97–175 (RCIGVFGLNT…RRIRVDFSIT (79 aa)). The segment at 176–196 (QRAHTPTPGVYLGRQPRGKAP) is linker. Residues 179-264 (HTPTPGVYLG…PQLRRTSSRY (86 aa)) form a disordered region. The residue at position 180 (Thr-180) is a Phosphothreonine. A compositionally biased stretch (basic residues) spans 191–206 (PRGKAPRSFSPRRGRR). Residues 207 to 234 (VYHDRSASPYDNYRDRYDYRNDRYDRNL) show a composition bias toward basic and acidic residues. A phosphoserine mark is found at Ser-212 and Ser-214. Over residues 235 to 250 (RRSPSRNRYTRNRSYS) the composition is skewed to basic residues. The residue at position 254 (Ser-254) is a Phosphoserine.

Belongs to the splicing factor SR family. In terms of processing, extensively phosphorylated on serine residues in the RS domain. In terms of tissue distribution, isoform Tmaj and isoform Tmin are expressed in males and females. Isoform msTmaj and isoform msTmin are present only in male germ cells.

Its function is as follows. Required for female sex determination in somatic cells and for spermatogenesis in male germ cells. Positive regulator of female-specific splicing and/or polyadenylation of doublesex (dsx) pre-mRNA. Splicing requires an enhancer complex, dsxRE (dsx repeat element: which contains six copies of a 13-nucleotide repeat and a purine-rich enhancer (PRE)). DsxRE is formed through cooperative interactions between tra, tra2 and the sr proteins, and these interactions require both the repeat sequences and PRE. PRE is required for specific binding of tra2 to the dsxRE. Protein-RNA and protein-protein interactions are involved in tra-2 dependent activation and repression of alternative splicing. Together with tra-2, plays a role in switching fru splicing from the male-specific pattern to the female-specific pattern through activation of the female-specific fru 5'-splice site. In Drosophila melanogaster (Fruit fly), this protein is Transformer-2 sex-determining protein (tra2).